The following is a 1823-amino-acid chain: Vitellogenin (1823 aa).

An N-terminal signal peptide occupies residues 1–14 (MWKLLLVALAFALA). A Pyrrolidone carboxylic acid modification is found at glutamine 17. In terms of domain architecture, Vitellogenin spans 18–658 (FQPGKVYRYS…SPSGPLPRAV (641 aa)). Residues 953–986 (KGLISQQQQQPHHQQQPHQHGQDQARAAYQRPWA) are disordered. A compositionally biased stretch (low complexity) spans 958-976 (QQQQQPHHQQQPHQHGQDQ). Residue asparagine 1097 is glycosylated (N-linked (GlcNAc...) asparagine). A disordered region spans residues 1119–1289 (SDKDKDAKKP…SSSSSESKSL (171 aa)). Composition is skewed to low complexity over residues 1128–1149 (PPGSSSSSSSSSSSSSSSSSSD) and 1178–1192 (SSSSSSSSSSSSDSS). The segment covering 1194–1206 (SPHKHGGAKRQHA) has biased composition (basic residues). Composition is skewed to low complexity over residues 1217–1238 (SHSSSSSSSSSSSSSSASKSFS) and 1253–1286 (SSSSSSSSDSSSSSSSSSSSSSSSSSSSSSSSES). Asparagine 1298 carries an N-linked (GlcNAc...) asparagine glycan. The interval 1308–1351 (VPQRKPQTSRRHTPASSSSSSSSSSSSSSSSSSSDSDMTVSAES) is disordered. Over residues 1323-1344 (SSSSSSSSSSSSSSSSSSSDSD) the composition is skewed to low complexity. Positions 1564–1732 (SACELNEQSL…SWIAPDETCG (169 aa)) constitute a VWFD domain. 2 cysteine pairs are disulfide-bonded: cysteine 1566-cysteine 1695 and cysteine 1589-cysteine 1731. The N-linked (GlcNAc...) asparagine glycan is linked to asparagine 1675.

Post-translationally, what corresponds to phosvitin in other species is lost during maturation of vitellogenin to lipovitellin. As to expression, produced by the liver, secreted into the blood and then sequestered by receptor mediated endocytosis into growing oocytes, where it is generally cleaved, giving rise to the respective yolk components lipovitellins 1 and 2.

Functionally, precursor of the major egg-yolk proteins that are sources of nutrients during early development of oviparous organisms. This chain is Vitellogenin, found in Ichthyomyzon unicuspis (Silver lamprey).